Reading from the N-terminus, the 67-residue chain is DNA gyrase inhibitor YacG (67 aa).

Positions 9, 12, 28, and 32 each coordinate Zn(2+). Positions 46 to 67 are disordered; it reads RIPSSGDLNDSDDWSEQPLDRQ.

It belongs to the DNA gyrase inhibitor YacG family. In terms of assembly, interacts with GyrB. The cofactor is Zn(2+).

In terms of biological role, inhibits all the catalytic activities of DNA gyrase by preventing its interaction with DNA. Acts by binding directly to the C-terminal domain of GyrB, which probably disrupts DNA binding by the gyrase. In Erwinia tasmaniensis (strain DSM 17950 / CFBP 7177 / CIP 109463 / NCPPB 4357 / Et1/99), this protein is DNA gyrase inhibitor YacG.